Consider the following 206-residue polypeptide: Large ribosomal subunit protein uL22m (206 aa).

Residues 1-40 (MAAAVLGQLGALWIHNLRSRGKLALGVLPQSYIHTSASLD) constitute a mitochondrion transit peptide.

Belongs to the universal ribosomal protein uL22 family. As to quaternary structure, component of the mitochondrial large ribosomal subunit (mt-LSU). Mature mammalian 55S mitochondrial ribosomes consist of a small (28S) and a large (39S) subunit. The 28S small subunit contains a 12S ribosomal RNA (12S mt-rRNA) and 30 different proteins. The 39S large subunit contains a 16S rRNA (16S mt-rRNA), a copy of mitochondrial valine transfer RNA (mt-tRNA(Val)), which plays an integral structural role, and 52 different proteins.

The protein localises to the mitochondrion. The sequence is that of Large ribosomal subunit protein uL22m (MRPL22) from Homo sapiens (Human).